We begin with the raw amino-acid sequence, 268 residues long: NH(3)-dependent NAD(+) synthetase (268 aa).

46–53 (GISGGQDS) contacts ATP. Residue D52 participates in Mg(2+) binding. R140 provides a ligand contact to deamido-NAD(+). Residue T160 participates in ATP binding. Position 165 (E165) interacts with Mg(2+). Residues K173 and D180 each contribute to the deamido-NAD(+) site. ATP-binding residues include K189 and T211. A deamido-NAD(+)-binding site is contributed by 260–261 (HK).

Belongs to the NAD synthetase family. As to quaternary structure, homodimer.

It catalyses the reaction deamido-NAD(+) + NH4(+) + ATP = AMP + diphosphate + NAD(+) + H(+). Its pathway is cofactor biosynthesis; NAD(+) biosynthesis; NAD(+) from deamido-NAD(+) (ammonia route): step 1/1. Functionally, catalyzes the ATP-dependent amidation of deamido-NAD to form NAD. Uses ammonia as a nitrogen source. This Buchnera aphidicola subsp. Schizaphis graminum (strain Sg) protein is NH(3)-dependent NAD(+) synthetase.